The primary structure comprises 152 residues: Putative RING finger protein 157L (152 aa).

The RING-type zinc-finger motif lies at 111–146; sequence CVVCYENEICIKIQPCNHFVVCKSCFNRLNTCPMCR.

It belongs to the IIV-6 157L family.

The chain is Putative RING finger protein 157L from Invertebrate iridescent virus 6 (IIV-6).